Consider the following 281-residue polypeptide: Phosphonates import ATP-binding protein PhnC 2 (281 aa).

The ABC transporter domain maps to 4 to 238; sequence LTVDNVTKTY…LVDDLYGNVE (235 aa). Residue 35-42 participates in ATP binding; that stretch reads GESGAGKS. A disordered region spans residues 243–281; it reads ATDNSDNSTVDTSDGTRYDTETGSDGTDEVDVIGRQVES. A compositionally biased stretch (low complexity) spans 244–255; that stretch reads TDNSDNSTVDTS.

This sequence belongs to the ABC transporter superfamily. Phosphonates importer (TC 3.A.1.9.1) family. In terms of assembly, the complex is composed of two ATP-binding proteins (PhnC), two transmembrane proteins (PhnE) and a solute-binding protein (PhnD).

The protein resides in the cell membrane. It catalyses the reaction phosphonate(out) + ATP + H2O = phosphonate(in) + ADP + phosphate + H(+). Functionally, part of the ABC transporter complex PhnCDE involved in phosphonates import. Responsible for energy coupling to the transport system. The polypeptide is Phosphonates import ATP-binding protein PhnC 2 (Haloquadratum walsbyi (strain DSM 16790 / HBSQ001)).